The sequence spans 398 residues: T-box transcription factor TBX1 (398 aa).

Residues 23–72 are disordered; it reads AAGGFPGAASPGADPYGPREPPPPPPRYDPCAAAAPGAPGPPPPPHAYPF. The segment covering 29–38 has biased composition (low complexity); sequence GAASPGADPY. 2 stretches are compositionally biased toward pro residues: residues 40 to 50 and 60 to 69; these read PREPPPPPPRY and APGPPPPPHA. The T-box DNA-binding region spans 119 to 297; the sequence is LWDEFNQLGT…SNPFAKGFRD (179 aa).

As to quaternary structure, binds DNA as a dimer. Interacts with DSCR6. Interacts with NKX2-5.

It is found in the nucleus. Transcription factor that plays a key role in cardiovascular development by promoting pharyngeal arch segmentation during embryonic development. Also involved in craniofacial muscle development. Together with NKX2-5, acts as a regulator of asymmetric cardiac morphogenesis by promoting expression of PITX2. Acts upstream of TBX1 for the formation of the thymus and parathyroid glands from the third pharyngeal pouch. Required for hair follicle stem cell self-renewal. Binds to the palindromic T site 5'-TTCACACCTAGGTGTGAA-3' DNA sequence. The chain is T-box transcription factor TBX1 from Homo sapiens (Human).